The primary structure comprises 293 residues: Glutamine sensor pib2 (293 aa).

Residues 38 to 75 (APTRQATNGTGSVSGSPNSSSNSTPANQGSLPSHTNPQ) form a disordered region. Residues 44 to 62 (TNGTGSVSGSPNSSSNSTP) are compositionally biased toward low complexity. The segment covering 63–75 (ANQGSLPSHTNPQ) has biased composition (polar residues). An FYVE-type; degenerate zinc finger spans residues 156–220 (DVSVCSFPSC…SCVSCFYEYL (65 aa)). Cysteine 178, cysteine 181, cysteine 212, and cysteine 215 together coordinate Zn(2+). The span at 242-256 (APQQATTHPPSQPKN) shows a compositional bias: polar residues. Positions 242-276 (APQQATTHPPSQPKNAVSVPIPKMDSTDSKGELPS) are disordered. Phosphoserine is present on serine 259.

As to quaternary structure, interacts with the TORC1 complex when activated by glutamine or cysteine.

Its subcellular location is the vacuole membrane. With respect to regulation, activated by glutamine. Functionally, functions as an intracellular glutamine sensor that directly activates the TORC1 signaling pathway, to promote cell growth when glutamine is available. This chain is Glutamine sensor pib2, found in Schizosaccharomyces pombe (strain 972 / ATCC 24843) (Fission yeast).